A 186-amino-acid polypeptide reads, in one-letter code: uncharacterized protein (186 aa).

Residues 1-28 (MSVKPAALFRISAALAVAGLGASLIASA) form the signal peptide.

This is an uncharacterized protein from Rhizobium meliloti (strain 1021) (Ensifer meliloti).